A 400-amino-acid chain; its full sequence is MKYDVLARAGFARRGNLHLPHSIVETPVFMPVGTQGTMKGVVTEQLVAMDCRILLCNTYHLGHRPGHERVKAAGGIHKMMNWNRSILTDSGGFQMVSLSKLMTVDENGVNFESPHTGEMMALPPEKSIEIQQALGADIMMQLDHVIHVLTTGDIVKEAMHRSIRWLDRCKVAHTRDDQAMFPILQGGLNLDLRKECAEEMAKRAKVGIAIGGLSGGEEKDHFWRVVAACCAALPPHLPRYVMGVGFPVDLVICSFLGADMFDCVYPTRTARFGTAMVRRGGLMQLNQKRYKEDFLPIDDKCKCNTCKNYTRAYIHSIAGKETVACHLVSIHNIKHQLDLMRDVRQAIQSNSVEKFLRQFLFDYYGPIQSENPSKQDTEKVQEVPQWVRDAVDHMGYTLDF.

Asp-89 (proton acceptor) is an active-site residue. Substrate contacts are provided by residues 89–93 (DSGGF), Asp-143, Gln-185, and Gly-212. The interval 243 to 249 (GVGFPVD) is RNA binding. Asp-262 serves as the catalytic Nucleophile. The RNA binding; important for wobble base 34 recognition stretch occupies residues 267–271 (TRTAR). Residues Cys-301, Cys-303, Cys-306, and His-331 each contribute to the Zn(2+) site.

The protein belongs to the queuine tRNA-ribosyltransferase family. Heterodimer of a catalytic subunit and an accessory subunit. The cofactor is Zn(2+).

It is found in the cytoplasm. The catalysed reaction is guanosine(34) in tRNA + queuine = queuosine(34) in tRNA + guanine. In terms of biological role, catalytic subunit of the queuine tRNA-ribosyltransferase (TGT) that catalyzes the base-exchange of a guanine (G) residue with queuine (Q) at position 34 (anticodon wobble position) in tRNAs with GU(N) anticodons (tRNA-Asp, -Asn, -His and -Tyr), resulting in the hypermodified nucleoside queuosine (7-(((4,5-cis-dihydroxy-2-cyclopenten-1-yl)amino)methyl)-7-deazaguanosine). Catalysis occurs through a double-displacement mechanism. The nucleophile active site attacks the C1' of nucleotide 34 to detach the guanine base from the RNA, forming a covalent enzyme-RNA intermediate. The proton acceptor active site deprotonates the incoming queuine, allowing a nucleophilic attack on the C1' of the ribose to form the product. The chain is Queuine tRNA-ribosyltransferase catalytic subunit from Caenorhabditis briggsae.